The primary structure comprises 413 residues: Zinc finger CCCH domain-containing protein 6 (413 aa).

3 disordered regions span residues 28–61 (PSQVGSESQDHLQAKSPLASHPSDDNLPPGFGGP), 159–191 (DSASDFPTQSGVDVGTEPSITDENTSTSSTLPA), and 333–356 (QPGGGPNPEMVNSSNNNQRPRDSK). Polar residues predominate over residues 176–189 (PSITDENTSTSSTL). The C3H1-type zinc finger occupies 357–385 (PKIMKACMYFNSARGCRHGANCMYQHDAT). The span at 389–403 (PRNLNNGNINTSDMQ) shows a compositional bias: polar residues. The tract at residues 389–413 (PRNLNNGNINTSDMQNAKRMRFDRD) is disordered.

This Arabidopsis thaliana (Mouse-ear cress) protein is Zinc finger CCCH domain-containing protein 6.